Reading from the N-terminus, the 524-residue chain is Adhesion G-protein coupled receptor G5 (524 aa).

An N-terminal signal peptide occupies residues 1–23 (MDPHGALFFYLCLLAAQVVLVET). The Extracellular segment spans residues 24 to 246 (LSDLLVLMKR…PAELQVPLEY (223 aa)). N-linked (GlcNAc...) asparagine glycans are attached at residues N58, N65, N96, N143, N169, and N175. A GAIN-B domain is found at 74 to 235 (QSLVFKLSCD…AVLMQLSGDP (162 aa)). Intrachain disulfides connect C185–C217 and C205–C219. The GPS stretch occupies residues 185–235 (CVFWKEGASKSSWGAWSPEGCYTEQPSATQVLCHCNHLTYFAVLMQLSGDP). The segment at 224–232 (YFAVLMQLS) is stachel. Residues 247-267 (ISFVGCSISIVASLLTILLYA) traverse the membrane as a helical segment. Residues 268 to 284 (QSRKQSDSTTRIHMNLN) are Cytoplasmic-facing. Residues 285–305 (GSVLLLNVTFLLSSQMTLPTM) form a helical membrane-spanning segment. At 306–319 (PRPVCKVLAAVLHY) the chain is on the extracellular side. The cysteines at positions 310 and 400 are disulfide-linked. Residues 320–340 (ALLSSLTWMAIEGFNLYLFLG) form a helical membrane-spanning segment. The Cytoplasmic portion of the chain corresponds to 341–351 (RVYNAYIRRYL). A helical membrane pass occupies residues 352 to 372 (LKLCMLGWGFPALLVLLLLMI). The Extracellular portion of the chain corresponds to 373-413 (KSSVYGPCVTSLSKSQENGTGFQNVSMCWIRSPMVHSILVM). Residues N390 and N396 are each glycosylated (N-linked (GlcNAc...) asparagine). The chain crosses the membrane as a helical span at residues 414 to 434 (GYGGFTSLFNLVVLAWALWIL). At 435–453 (CRLRAREKALSPWAYRDTA) the chain is on the cytoplasmic side. Residues 454–476 (MVLGLTVLLGTTWTLAFFSFGVF) form a helical membrane-spanning segment. The Extracellular segment spans residues 477-480 (LLPQ). The chain crosses the membrane as a helical span at residues 481–500 (LFLFTIFNSLYGFFLFLWFC). Topologically, residues 501-524 (SQKRYSDAEAKAEMEAVSSSQMTH) are cytoplasmic.

This sequence belongs to the G-protein coupled receptor 2 family. Adhesion G-protein coupled receptor (ADGR) subfamily. In terms of assembly, heterodimer of 2 chains generated by proteolytic processing; the large extracellular N-terminal fragment and the membrane-bound C-terminal fragment predominantly remain associated and non-covalently linked. Post-translationally, autoproteolytically processed at the GPS region of the GAIN-B domain; this cleavage modulates receptor activity. As to expression, expressed at least in kidney, heart, brain and spleen. Isoform 1 is predominant in spleen. In the kidney, both isoform 1 and isoform 2 are expressed at similar levels. In terms of tissue distribution, isoform 2 is the major form in heart and brain. In the kidney, both isoform 1 and isoform 2 are expressed at similar levels.

Its subcellular location is the cell membrane. Its activity is regulated as follows. Forms a heterodimer of 2 chains generated by proteolytic processing that remain associated through non-covalent interactions mediated by the GAIN-B domain. In the inactivated receptor, the Stachel sequence (also named stalk) is embedded in the GAIN-B domain, where it adopts a beta-strand conformation. On activation, the Stachel moves into the 7 transmembrane region and adopts a twisted hook-shaped configuration that forms contacts within the receptor, leading to coupling of a G-alpha protein, which activates signaling. The cleaved GAIN-B and N-terminal domains can then dissociate from the rest of the receptor. Orphan adhesion G-protein coupled receptor (aGPCR). Ligand binding causes a conformation change that triggers signaling via guanine nucleotide-binding proteins (G proteins) and modulates the activity of downstream effectors, such as adenylate cyclase. ADGRG5 is specifically coupled to G(s) G proteins and mediates activation of adenylate cyclase activity. In terms of biological role, isoform 1, but not isoform 2, is constitutively active, as evidenced by elevated basal cAMP levels, and responds to mechanical activation (shaking). The chain is Adhesion G-protein coupled receptor G5 from Mus musculus (Mouse).